Consider the following 189-residue polypeptide: GTPase KRas (189 aa).

N-acetylmethionine is present on M1. At T2 the chain carries N-acetylthreonine; in GTPase KRas, N-terminally processed. Residues 10–18, 29–35, and 59–60 each bind GTP; these read GAGGVGKSA, VDEYDPT, and AG. The Effector region motif lies at 32–40; the sequence is YDPTIEDSY. Residue K104 is modified to N6-acetyllysine. A GTP-binding site is contributed by 116-119; sequence NKCD. The segment at 166–185 is hypervariable region; the sequence is YRLKKISKEEKTPGCVKIKK. Residue K170 forms a Glycyl lysine isopeptide (Lys-Gly) (interchain with G-Cter in ubiquitin) linkage. C180 carries S-palmitoyl cysteine lipidation. N6-palmitoyl lysine attachment occurs at residues K182, K184, and K185. C186 carries the post-translational modification Cysteine methyl ester. A lipid anchor (S-farnesyl cysteine) is attached at C186. The propeptide at 187–189 is removed in mature form; sequence VIM.

This sequence belongs to the small GTPase superfamily. Ras family. Interacts with PHLPP. Interacts (active GTP-bound form preferentially) with RGS14. Interacts (when farnesylated) with PDE6D; this promotes dissociation from the cell membrane. Interacts with SOS1. Interacts (when farnesylated) with GPR31. Interacts with RAP1GDS1. Interacts (active GTP-bound form) with both SHOC2 and PP1c (all isoforms) to form a tertiary complex; SHOC2 and PP1c preferably bind M-Ras/MRAS, but they also bind K-Ras/KRAS, N-Ras/NRAS and H-Ras/HRAS. Interacts (GTP-bound form) with MAPKAP1/SIN1; inhibiting K-Ras/KRAS activity. As to quaternary structure, interacts (when farnesylated) with GPR31. Post-translationally, acetylation at Lys-104 prevents interaction with guanine nucleotide exchange factors (GEFs). In terms of processing, ubiquitinated by the BCR(LZTR1) E3 ubiquitin ligase complex at Lys-170 in a non-degradative manner, leading to inhibit Ras signaling by decreasing Ras association with membranes. Palmitoylated at Lys-182, Lys-184 and Lys-185. Lysine-depalmitoylation by SIRT2 promotes its localization to endomembranes in endocytic pathways.

Its subcellular location is the cell membrane. The protein localises to the endomembrane system. The protein resides in the cytoplasm. It localises to the cytosol. It catalyses the reaction GTP + H2O = GDP + phosphate + H(+). Alternates between an inactive form bound to GDP and an active form bound to GTP. Activated by a guanine nucleotide-exchange factor (GEF) and inactivated by a GTPase-activating protein (GAP). Interaction with SOS1 promotes exchange of bound GDP to GTP. Ras proteins bind GDP/GTP and possess intrinsic GTPase activity. Plays an important role in the regulation of cell proliferation. Plays a role in promoting oncogenic events by inducing transcriptional silencing of tumor suppressor genes (TSGs) in colorectal cancer (CRC) cells in a ZNF304-dependent manner. This Rattus norvegicus (Rat) protein is GTPase KRas (Kras).